We begin with the raw amino-acid sequence, 132 residues long: Small ribosomal subunit protein uS8 (132 aa).

It belongs to the universal ribosomal protein uS8 family. In terms of assembly, part of the 30S ribosomal subunit. Contacts proteins S5 and S12.

In terms of biological role, one of the primary rRNA binding proteins, it binds directly to 16S rRNA central domain where it helps coordinate assembly of the platform of the 30S subunit. The chain is Small ribosomal subunit protein uS8 from Geobacter sulfurreducens (strain ATCC 51573 / DSM 12127 / PCA).